We begin with the raw amino-acid sequence, 281 residues long: NADPH-dependent 7-cyano-7-deazaguanine reductase (281 aa).

88 to 90 contacts substrate; sequence VES. Position 90-91 (90-91) interacts with NADPH; that stretch reads SK. C189 serves as the catalytic Thioimide intermediate. D196 (proton donor) is an active-site residue. 228–229 is a substrate binding site; sequence HE. 257–258 is a binding site for NADPH; the sequence is RG.

This sequence belongs to the GTP cyclohydrolase I family. QueF type 2 subfamily. As to quaternary structure, homodimer.

The protein localises to the cytoplasm. It catalyses the reaction 7-aminomethyl-7-carbaguanine + 2 NADP(+) = 7-cyano-7-deazaguanine + 2 NADPH + 3 H(+). The protein operates within tRNA modification; tRNA-queuosine biosynthesis. Catalyzes the NADPH-dependent reduction of 7-cyano-7-deazaguanine (preQ0) to 7-aminomethyl-7-deazaguanine (preQ1). The polypeptide is NADPH-dependent 7-cyano-7-deazaguanine reductase (Klebsiella pneumoniae (strain 342)).